Reading from the N-terminus, the 184-residue chain is Ribosome-recycling factor (184 aa).

Belongs to the RRF family.

It is found in the cytoplasm. Responsible for the release of ribosomes from messenger RNA at the termination of protein biosynthesis. May increase the efficiency of translation by recycling ribosomes from one round of translation to another. In Psychrobacter arcticus (strain DSM 17307 / VKM B-2377 / 273-4), this protein is Ribosome-recycling factor.